We begin with the raw amino-acid sequence, 171 residues long: Nicotinamide-nucleotide adenylyltransferase (171 aa).

The protein belongs to the archaeal NMN adenylyltransferase family.

It localises to the cytoplasm. The catalysed reaction is beta-nicotinamide D-ribonucleotide + ATP + H(+) = diphosphate + NAD(+). Its pathway is cofactor biosynthesis; NAD(+) biosynthesis; NAD(+) from nicotinamide D-ribonucleotide: step 1/1. The sequence is that of Nicotinamide-nucleotide adenylyltransferase from Methanococcus maripaludis (strain C5 / ATCC BAA-1333).